The primary structure comprises 173 residues: Photosystem I assembly protein Ycf3 (173 aa).

TPR repeat units lie at residues Ala35 to Gln68, Gly72 to Gln105, and Gly120 to Gly153.

The protein belongs to the Ycf3 family.

The protein localises to the cellular thylakoid membrane. Its function is as follows. Essential for the assembly of the photosystem I (PSI) complex. May act as a chaperone-like factor to guide the assembly of the PSI subunits. The polypeptide is Photosystem I assembly protein Ycf3 (Prochlorococcus marinus (strain NATL1A)).